Here is a 336-residue protein sequence, read N- to C-terminus: Pyridoxal 5'-phosphate synthase subunit PdxS (336 aa).

Asp-62 is a binding site for D-ribose 5-phosphate. Lys-119 functions as the Schiff-base intermediate with D-ribose 5-phosphate in the catalytic mechanism. Gly-191 contributes to the D-ribose 5-phosphate binding site. Residue Lys-203 coordinates D-glyceraldehyde 3-phosphate. D-ribose 5-phosphate is bound by residues Gly-254 and 275–276 (GS).

The protein belongs to the PdxS/SNZ family. In terms of assembly, in the presence of PdxT, forms a dodecamer of heterodimers.

It catalyses the reaction aldehydo-D-ribose 5-phosphate + D-glyceraldehyde 3-phosphate + L-glutamine = pyridoxal 5'-phosphate + L-glutamate + phosphate + 3 H2O + H(+). It participates in cofactor biosynthesis; pyridoxal 5'-phosphate biosynthesis. Catalyzes the formation of pyridoxal 5'-phosphate from ribose 5-phosphate (RBP), glyceraldehyde 3-phosphate (G3P) and ammonia. The ammonia is provided by the PdxT subunit. Can also use ribulose 5-phosphate and dihydroxyacetone phosphate as substrates, resulting from enzyme-catalyzed isomerization of RBP and G3P, respectively. This chain is Pyridoxal 5'-phosphate synthase subunit PdxS, found in Pyrobaculum calidifontis (strain DSM 21063 / JCM 11548 / VA1).